Consider the following 477-residue polypeptide: 3-sulfolactaldehyde dehydrogenase (477 aa).

232-233 (GS) is a binding site for NAD(+). Glutamate 252 acts as the Proton acceptor in catalysis. An NAD(+)-binding site is contributed by leucine 253. Catalysis depends on cysteine 286, which acts as the Nucleophile. Position 380 (glutamate 380) interacts with NAD(+).

This sequence belongs to the aldehyde dehydrogenase family.

It carries out the reaction (2S)-3-sulfolactaldehyde + NAD(+) + H2O = (2S)-3-sulfolactate + NADH + 2 H(+). In terms of biological role, part of the sulfo-TAL (or sulfo-SFT) pathway, a D-sulfoquinovose degradation pathway that produces sulfolactate (SL). Catalyzes the oxidation of 3-sulfolactaldehyde (SLA) to sulfolactate (SL). This chain is 3-sulfolactaldehyde dehydrogenase, found in Priestia aryabhattai (Bacillus aryabhattai).